We begin with the raw amino-acid sequence, 234 residues long: MARKKAVKVEADPRLNAVNEALKFIKDGMIVGLGSGTTANLFIAELGKKISEEGLNVFGVPTSFESRMMAIQYGIPLVSLDEYGELDIAVDGADEVNKETLNVIKGGGGCHTQEKIIDYCAKELIIIVDESKLVDSLGENTPVPLEVLPFAYSSVLNELLKMNSAPSIRMADKKMGPVITDNGNMIIDVFIDLNNPEEVEKQLNNIPGVVENGIFTKVDKVIVGKSDKAEILKK.

Substrate is bound by residues 35-38 (SGTT), 91-94 (DGAD), and 105-108 (KGGG). The active-site Proton acceptor is E114. K132 serves as a coordination point for substrate.

This sequence belongs to the ribose 5-phosphate isomerase family. As to quaternary structure, homodimer.

The enzyme catalyses aldehydo-D-ribose 5-phosphate = D-ribulose 5-phosphate. It participates in carbohydrate degradation; pentose phosphate pathway; D-ribose 5-phosphate from D-ribulose 5-phosphate (non-oxidative stage): step 1/1. Functionally, catalyzes the reversible conversion of ribose-5-phosphate to ribulose 5-phosphate. This chain is Ribose-5-phosphate isomerase A, found in Methanococcus aeolicus (strain ATCC BAA-1280 / DSM 17508 / OCM 812 / Nankai-3).